The chain runs to 144 residues: Protein WAP-3 (144 aa).

The signal sequence occupies residues 1 to 21 (MRSRSFLVLVAVFLICETLVA). Positions 28–49 (RGPKGQGQDPVEGQDQDEGQGP) are disordered. G34 is a region of interest (8 X 6 AA approximate tandem repeats). Tandem repeats lie at residues 34–39 (GQDPVE), 40–45 (GQDQDE), 46–51 (GQGPVK), 58–63 (GQDLVK), 64–69 (GQDPVE), 70–75 (GQDPVK), 76–81 (AQLPDK), and 82–87 (VQDPVK). Residues 64–85 (GQDPVEGQDPVKAQLPDKVQDP) form a disordered region. One can recognise a WAP domain in the interval 97–144 (LFPKPGVCPKIIFCPLVNPPIKCWRDSHCPGVKKCCPSLCGKGCVTPR). Intrachain disulfides connect C104/C132, C110/C136, C119/C131, and C125/C140.

In terms of tissue distribution, large intestine (relatively low levels).

In Sus scrofa (Pig), this protein is Protein WAP-3.